The primary structure comprises 351 residues: UDP-N-acetylglucosamine--N-acetylmuramyl-(pentapeptide) pyrophosphoryl-undecaprenol N-acetylglucosamine transferase (351 aa).

UDP-N-acetyl-alpha-D-glucosamine-binding positions include Thr-13–Gly-15, Asn-125, Arg-161, Ser-189, Ile-241, Ala-260–Glu-265, and Gln-285.

It belongs to the glycosyltransferase 28 family. MurG subfamily.

It localises to the cell inner membrane. It carries out the reaction di-trans,octa-cis-undecaprenyl diphospho-N-acetyl-alpha-D-muramoyl-L-alanyl-D-glutamyl-meso-2,6-diaminopimeloyl-D-alanyl-D-alanine + UDP-N-acetyl-alpha-D-glucosamine = di-trans,octa-cis-undecaprenyl diphospho-[N-acetyl-alpha-D-glucosaminyl-(1-&gt;4)]-N-acetyl-alpha-D-muramoyl-L-alanyl-D-glutamyl-meso-2,6-diaminopimeloyl-D-alanyl-D-alanine + UDP + H(+). The protein operates within cell wall biogenesis; peptidoglycan biosynthesis. In terms of biological role, cell wall formation. Catalyzes the transfer of a GlcNAc subunit on undecaprenyl-pyrophosphoryl-MurNAc-pentapeptide (lipid intermediate I) to form undecaprenyl-pyrophosphoryl-MurNAc-(pentapeptide)GlcNAc (lipid intermediate II). In Haemophilus influenzae (strain 86-028NP), this protein is UDP-N-acetylglucosamine--N-acetylmuramyl-(pentapeptide) pyrophosphoryl-undecaprenol N-acetylglucosamine transferase.